Reading from the N-terminus, the 450-residue chain is MDADKIVFKVNNQVVSLKPEIIVDQYEYKYPAIKDLKKPCITLGKAPDLNKAYKSVLSGMNAAKLDPDDVCSYLAAAMQFFEGTCPEDWTSYGILIARKGDRITPNPLVEIKRTDVEGNWALTGGMELTRDPTVSEHASLVGLLLSLYRLSKISGQNTGNYKTNIADRIEQIFETAPFVKIVEHHTLMTTHKMCANWSTIPNFRFLAGTYDMFFSRIEHLYSAIRVGTVVTAYEDCSGLVSFTGFIKQINLTAREAILYFFHKNFEEEIRRMFEPGQETAVPHSYFIHFRSLGLSGKSPYSSNAVGHVFNLIHFVGCYMGQVRSLNATVIAACAPHEMSVLGGYLGEEFFGKGTFERRFFRDEKELQEYEAAELTKSDVALADDGTVNSDDEDYFSGETRSPEAVYTRIMMNGGRLKRSHIRRYVSVSSNHQARPNSFAEFLNKTYSNDS.

The residue at position 389 (Ser-389) is a Phosphoserine; by host CK2.

This sequence belongs to the lyssavirus nucleocapsid protein family. As to quaternary structure, homomultimerizes to form the nucleocapsid. Binds to viral genomic RNA. In nucleocapsid, binds protein P and thereby positions the polymerase on the template. Protein P acts as a chaperone on free protein N to prevent it from aggregation before encapsidating genomic RNA. In terms of processing, phosphorylated by host CK2. Unphosphorylated protein N seems to have a better affinity for leader viral promoter encapsidation. Phosphorylation of protein N in ribonucleocapsid may stabilize the interaction with protein P, thereby playing an important role in viral transcription/replication.

The protein localises to the virion. Its subcellular location is the host cytoplasm. Its function is as follows. Encapsidates the genome in a ratio of one protein N per nine ribonucleotides, protecting it from nucleases. If expressed without protein P it binds non-specifically RNA and therefore can bind it's own mRNA. Interaction with protein P abolishes any non-specific RNA binding, and prevents phosphorylation. The soluble N-P complex encapsidates specifically the genomic RNA, with protein N protecting the genome like a pearl necklace. The encapsidated genomic RNA is termed the nucleocapsid (NC) and serves as template for viral transcription and replication. Protein N binds protein P in the NC through a different interaction, and can be phosphorylated. Subsequent viral replication is dependent on intracellular concentration of newly synthesized protein N. During replication, encapsidation by protein N is coupled to RNA synthesis and all replicative products are resistant to nucleases. The protein is Nucleoprotein (N) of Rabies virus (strain China/MRV) (RABV).